Reading from the N-terminus, the 428-residue chain is Transcription factor Sp7 (428 aa).

Residues 30–84 (SSPLRDSTTLGKGGTKKPYADLSAPKTMGDAYPAPFSSTNGLLSPAGSPPAPASG) are disordered. 2 positions are modified to N6-propionyllysine: lysine 41 and lysine 45. Residue lysine 55 forms a Glycyl lysine isopeptide (Lys-Gly) (interchain with G-Cter in ubiquitin) linkage. The 9aaTAD motif lies at 153–161 (TPWWDMHPG). Lysine 227 is covalently cross-linked (Glycyl lysine isopeptide (Lys-Gly) (interchain with G-Cter in ubiquitin)). Residues 229 to 257 (KAVGNSGQLEGSGAAKPPRGAGTGGSGGY) are disordered. C2H2-type zinc fingers lie at residues 291–315 (HSCH…LRWH), 321–345 (FVCN…VRTH), and 351–373 (FTCL…QRTH). 2 positions are modified to N6-propionyllysine: lysine 358 and lysine 368. Residues 364-428 (DHLSKHQRTH…SPEQSNLLEI (65 aa)) form a disordered region.

It belongs to the Sp1 C2H2-type zinc-finger protein family. In terms of assembly, interacts with RIOX1; the interaction is direct and inhibits transcription activator activity. In terms of processing, propionylated. Depropionylation at Lys-368 by SIRT7 activates transcription factor activity and positively regulates bone formation by osteoblasts. Post-translationally, ubiquitination at leads to proteasomal degradation. SP7 is a short-live protein with an endogenous half-life of approximately 12 hours. As to expression, osteoblast/chondrocyte specific.

It localises to the nucleus. Functionally, transcriptional activator essential for osteoblast differentiation. Binds to SP1 and EKLF consensus sequences and to other G/C-rich sequences. In Mus musculus (Mouse), this protein is Transcription factor Sp7 (Sp7).